Consider the following 383-residue polypeptide: Dual-specificity RNA methyltransferase RlmN (383 aa).

Glutamate 93 (proton acceptor) is an active-site residue. Residues 99 to 339 (EETRGTLCVS…TTIRKTRGDD (241 aa)) form the Radical SAM core domain. The cysteines at positions 106 and 344 are disulfide-linked. 3 residues coordinate [4Fe-4S] cluster: cysteine 113, cysteine 117, and cysteine 120. Residues 170–171 (GE), serine 202, 224–226 (SLH), and asparagine 301 each bind S-adenosyl-L-methionine. Residue cysteine 344 is the S-methylcysteine intermediate of the active site.

This sequence belongs to the radical SAM superfamily. RlmN family. Requires [4Fe-4S] cluster as cofactor.

Its subcellular location is the cytoplasm. It catalyses the reaction adenosine(2503) in 23S rRNA + 2 reduced [2Fe-2S]-[ferredoxin] + 2 S-adenosyl-L-methionine = 2-methyladenosine(2503) in 23S rRNA + 5'-deoxyadenosine + L-methionine + 2 oxidized [2Fe-2S]-[ferredoxin] + S-adenosyl-L-homocysteine. It carries out the reaction adenosine(37) in tRNA + 2 reduced [2Fe-2S]-[ferredoxin] + 2 S-adenosyl-L-methionine = 2-methyladenosine(37) in tRNA + 5'-deoxyadenosine + L-methionine + 2 oxidized [2Fe-2S]-[ferredoxin] + S-adenosyl-L-homocysteine. In terms of biological role, specifically methylates position 2 of adenine 2503 in 23S rRNA and position 2 of adenine 37 in tRNAs. m2A2503 modification seems to play a crucial role in the proofreading step occurring at the peptidyl transferase center and thus would serve to optimize ribosomal fidelity. The polypeptide is Dual-specificity RNA methyltransferase RlmN (Ralstonia nicotianae (strain ATCC BAA-1114 / GMI1000) (Ralstonia solanacearum)).